The chain runs to 506 residues: MAVISLLQGLSVGQQIGTAAAISVFVLTSIVVYGCYLHPLSHVPGPFLAKFSPIWGMRALYRMKFNSELQALHEKYGPVVRVAPNEVSFATLEAETAIYANQEDGRFSKAGTFLTLFSDLVLNAPTLITIPDPALHKRLHKVIQQAFTPQALASQEPIQKLHIEKAIPDFDETADKGYHIDLADKLETMFWEIIGDLAFGEPLMAGKRPTYEKLKQLGKGSMPMVEALSFMLVMPGVAPTLEMARSFLSAMPMSSQLSKLVPSTKLRDCVERKDGREDFLSAIMGSEKQGLTLDADAFFSNAMGLTLAGYQTTATTLASTFYHVLRYTDAYKTLCTEIRSAFNDEAEITGERLARLPFLNACIRETLRLLPPANGKTAQRTAPSCTIADTYIPAGTIVSADLYTIQRSPKYFVDPARFHPERWLEDAEKNGFNGDNRSASRPFLIGSRACIGRHMAQQSIRLIMATLLWRYDFELLDPDGFIWERDAGSSLIYTDYKLPVHVKRFQ.

Cys-450 provides a ligand contact to heme.

It belongs to the cytochrome P450 family. It depends on heme as a cofactor.

It participates in secondary metabolite biosynthesis; terpenoid biosynthesis. In terms of biological role, cytochrome P450 monooxygenase; part of the gene cluster that mediates the biosynthesis of terpestacin. The bifunctional terpene synthase tpcA converts isopentenyl diphosphate (IPP) and dimethylallyl diphosphate (DMAPP) into the sesterterpene preterpestacin I. The C-terminal prenyltransferase (PT) domain of tpcA catalyzes formation of GFPP, whereas the N-terminal terpene cyclase (TC) domain catalyzes the cyclization of GFPP into preterpestacin I. The cytochrome P450 monooxygenase tpcB then hydroxylates preterpestacin I to yield 24-hydroxypreterpstacin I (renamed as preterpestacin II) whereas the cytochrome P450 monooxygenase tpcC further hydroxylates preterpestacin II to yield 16,17-dihydroxypreterpestacin II (renamed as preterpestacin III). Finally, the FAD-dependent monooxygenase tpcD converts preterpestacin III into terpestacin. The chain is Cytochrome P450 monooxygenase tpcB from Cochliobolus heterostrophus (strain C5 / ATCC 48332 / race O) (Southern corn leaf blight fungus).